Reading from the N-terminus, the 428-residue chain is MNNQKSKELFQEAQKYLVGGVNSPVRAFKAVEADPIFIKKGKGCRIWDVDDNEYIDYVLSWGPLILGHAHDQVINAIKQISNYGTSFGAPTELEVEMAKAVIDAVKSVEMVRFVNSGTEATMSAIRLARGYTKRKKIIKFDGCYHGHGDSLLVSAGSGVATLGIPGTPGIPEELASLTIVLPYNNIEAVEEAFEKYGDDIACVIIEPVAGNMGVVAPSKEYHQKLREITRKYGALLIFDEVMTGFRLSYGGAQELYDIEPDLTTFGKVIGGGLPVGAYGGKGEIMEYVAPVGPVYQAGTLSGNPLAMAAGLTQLQLLKQLNPYQELNEKGRFLEEGFKKISQETGVPVVVNRVGSMITVFFTDKEVVDFATAKTSDTKKFAKFFRCMLEKGIYLPASQFEAFFLSTAHSQRDLEDTLNKAYECFKQLS.

At lysine 267 the chain carries N6-(pyridoxal phosphate)lysine.

This sequence belongs to the class-III pyridoxal-phosphate-dependent aminotransferase family. HemL subfamily. As to quaternary structure, homodimer. Pyridoxal 5'-phosphate is required as a cofactor.

Its subcellular location is the cytoplasm. It carries out the reaction (S)-4-amino-5-oxopentanoate = 5-aminolevulinate. It functions in the pathway porphyrin-containing compound metabolism; protoporphyrin-IX biosynthesis; 5-aminolevulinate from L-glutamyl-tRNA(Glu): step 2/2. This chain is Glutamate-1-semialdehyde 2,1-aminomutase, found in Sulfurihydrogenibium sp. (strain YO3AOP1).